Reading from the N-terminus, the 352-residue chain is ATP synthase subunit a 2 (352 aa).

A signal peptide spans 1–26 (MRKKAISRILALVVPVLLSLNSQAFA). 7 consecutive transmembrane segments (helical) span residues 112 to 132 (VVMIWLAAILLVVIASAAGAS), 172 to 192 (FLPYLLTVFFFILVCNLLGLI), 195 to 215 (GATATGNINVTLTLSVFTFVI), 232 to 252 (HLTAGTHWALWIIMVPIEILG), 264 to 284 (LFANMTAGHIIILSLFFISFI), 289 to 309 (IVAVAVSIPFAIFIYLLELFV), and 310 to 330 (AFLQAYVFTMLSALFIGLATA).

This sequence belongs to the ATPase A chain family. In terms of assembly, F-type ATPases have 2 components, CF(1) - the catalytic core - and CF(0) - the membrane proton channel. CF(1) has five subunits: alpha(3), beta(3), gamma(1), delta(1), epsilon(1). CF(0) has four main subunits: a, b, b' and c.

Its subcellular location is the cell inner membrane. In terms of biological role, key component of the proton channel; it plays a direct role in the translocation of protons across the membrane. This chain is ATP synthase subunit a 2, found in Chlorobaculum tepidum (strain ATCC 49652 / DSM 12025 / NBRC 103806 / TLS) (Chlorobium tepidum).